Consider the following 78-residue polypeptide: Pigment-dispersing hormone 1 peptides (78 aa).

The signal sequence occupies residues 1–22 (MRSSVIVAVLVVVALAALLTQG). Position 75 is an alanine amide (Ala75).

Belongs to the arthropod PDH family. In terms of tissue distribution, eyestalk sinus gland.

The protein resides in the secreted. Functionally, the pigment-dispersing hormone causes the migration of the distal retinal pigment into the proximal end of the pigment chromatophore cells and thus decreases the amount of light entering the retinulas. May also function as a neurotransmitter and/or neuromodulator. This chain is Pigment-dispersing hormone 1 peptides (PDH1), found in Callinectes sapidus (Blue crab).